The primary structure comprises 173 residues: Protein tyrosine phosphatase type IVA 1 (173 aa).

Residues Ala8–Lys161 form the Tyrosine-protein phosphatase domain. A disulfide bridge connects residues Cys49 and Cys104. The active-site Proton donor is Asp72. Residues Gly97–Phe132 form an interaction with ATF5 region. The active-site Phosphocysteine intermediate is Cys104. Val105–Arg110 contacts phosphate. Residue Arg110 coordinates substrate. Cysteine methyl ester is present on Cys170. Cys170 carries the S-farnesyl cysteine lipid modification. Residues Cys171–Gln173 constitute a propeptide, removed in mature form.

It belongs to the protein-tyrosine phosphatase family. As to quaternary structure, homotrimer. Interacts with ATF5 and tubulin. Post-translationally, farnesylated. Farnesylation is required for membrane targeting.

Its subcellular location is the cell membrane. The protein resides in the early endosome. The protein localises to the endoplasmic reticulum. It is found in the cytoplasm. It localises to the cytoskeleton. Its subcellular location is the spindle. The protein resides in the nucleus. The catalysed reaction is O-phospho-L-tyrosyl-[protein] + H2O = L-tyrosyl-[protein] + phosphate. With respect to regulation, inhibited by sodium orthovanadate and pentamidine. Protein tyrosine phosphatase which stimulates progression from G1 into S phase during mitosis. May play a role in the development and maintenance of differentiating epithelial tissues. The chain is Protein tyrosine phosphatase type IVA 1 (PTP4A1) from Pongo abelii (Sumatran orangutan).